Here is a 236-residue protein sequence, read N- to C-terminus: Snake venom serine protease ussurin (236 aa).

A Peptidase S1 domain is found at 1 to 227; it reads VIGGVECNIN…YTDWIQSIIS (227 aa). A disulfide bond links cysteine 28 and cysteine 44. Catalysis depends on charge relay system residues histidine 43 and aspartate 88. N-linked (GlcNAc...) asparagine glycans are attached at residues asparagine 99 and asparagine 100. 3 disulfides stabilise this stretch: cysteine 120/cysteine 188, cysteine 152/cysteine 167, and cysteine 178/cysteine 203. Serine 182 functions as the Charge relay system in the catalytic mechanism.

It belongs to the peptidase S1 family. Snake venom subfamily. As to quaternary structure, monomer. As to expression, expressed by the venom gland.

The protein localises to the secreted. Snake venom serine protease that may act in the hemostasis system of the prey. The sequence is that of Snake venom serine protease ussurin from Gloydius ussuriensis (Ussuri mamushi).